A 133-amino-acid chain; its full sequence is Small ribosomal subunit protein uS8 (133 aa).

This sequence belongs to the universal ribosomal protein uS8 family. Part of the 30S ribosomal subunit. Contacts proteins S5 and S12.

Its function is as follows. One of the primary rRNA binding proteins, it binds directly to 16S rRNA central domain where it helps coordinate assembly of the platform of the 30S subunit. The polypeptide is Small ribosomal subunit protein uS8 (Mycoplasma mobile (strain ATCC 43663 / 163K / NCTC 11711) (Mesomycoplasma mobile)).